A 1435-amino-acid polypeptide reads, in one-letter code: MLKSNDCLFSLENLFFEKPDEVENHPDNEKSLDWFLPPAPLISEIPDTQELEEELESHKLLGQEKRPKMLTSNLKITNEDTNYISLTQKFQFAFPSDKYEQDDLNLEGVGNNDLSHIAGKLTYASQKYKNHIGTEIAPEKSVPDDTKLVNFAEDKGESTSVFRKRLFKISDNIHGSAYSNDNELDSHIGSVKIVQTEMNKGKSRNYSNSKQKFQYSANVFTANNAFSASEIGEGMFKAPSFSVAFQPHDIQEVTENGLGSLKAVTEIPAKFRSIFKEFPYFNYIQSKAFDDLLYTDRNFVICAPTGSGKTVVFELAITRLLMEVPLPWLNIKIVYMAPIKALCSQRFDDWKEKFGPIGLNCKELTGDTVMDDLFEIQHAHIIMTTPEKWDSMTRKWRDNSLVQLVRLFLIDEVHIVKDENRGPTLEVVVSRMKTVQSVSQTLKNTSTAIPMRFVAVSATIPNAEDIAEWLSDGERPAVCLKMDESHRPVKLQKVVLGFPCSSNQTEFKFDLTLNYKIASVIQMYSDQKPTLVFCATRKGVQQAASVLVKDAKFIMTVEQKQRLQKYAYSVRDSKLRDILKDGAAYHHAGMELSDRKVVEGAFTVGDLPVLFTTSTLAMGVNLPAHLVVIKSTMHYAGGLFEEYSETDILQMIGRAGRPQFDTTATAVIMTRLSTRDKYIQMLACRDTVESSLHRHLIEHLNAEIVLHTITDVNIAVEWIRSTLLYIRALKNPSHYGFASGLNKDGIEAKLQELCLKNLNDLSSLDLIKMDEGVNFKPTEAGRLMAWYYITFETVKKFYTISGKETLSDLVTLIAGCKEFLDIQLRINEKKTLNTLNKDPNRITIRFPMEGRIKTREMKVNCLIQAQLGCIPIQDFALTQDTAKIFRHGSRITRWLSDFVAAQEKKFAVLLNSLILAKCFRCKLWENSLHVSKQLEKIGITLSNAIVNAGLTSFKKIEETDARELELILNRHPPFGTQIKETVMYLPKYELKVEQITRYSDTTAEILVTVILRNFEQLQTKRTASDSHYVTLIIGDADNQVVYLHKITDSVLLKAGSWAKKIAVKRALKSEDLSINLISSEFVGLDIQQKLTVFYLEPKRFGNQITMQRKSETQISHSKHSDISTIAGPNKGTTASKKPGNRECNHLCKSKHTCGHDCCKIGVAQKSEIKESTISSYLSDLRNRNAVSSVPPVKRLKIQMNKSQSVDLKEFGFTPKPSLPSISRSEYLNISELPIMEQWDQPEIYGKVRQEPSEYQDKEVLNVNFELGNEVWDDFDDENLEVTSFSTDTEKTKISGFGNTLSSSTRGSKLPLQESKSKFQREMSNSFVSSHEMSDISLSNSAMPKFSASSMTKLPQQAGNAVIVHFQERKPQNLSPEIEKQCFTFSEKNPNSSNYKKVDFFIRNSECKKEVDFSMYHPDDEADEMKSLLGIFDGIF.

One can recognise a Helicase ATP-binding domain in the interval 290 to 478 (DDLLYTDRNF…WLSDGERPAV (189 aa)). Position 303 to 310 (303 to 310 (APTGSGKT)) interacts with ATP. Positions 411–414 (DEVH) match the DEAH box motif. The region spanning 519 to 720 (SVIQMYSDQK…DVNIAVEWIR (202 aa)) is the Helicase C-terminal domain. Residues 777 to 1092 (PTEAGRLMAW…GLDIQQKLTV (316 aa)) form the SEC63 domain. Residues 1109 to 1139 (KSETQISHSKHSDISTIAGPNKGTTASKKPG) are disordered. The C4-type zinc-finger motif lies at 1143–1158 (CNHLCKSKHTCGHDCC). The tract at residues 1295-1315 (GFGNTLSSSTRGSKLPLQESK) is disordered. Residues 1296-1306 (FGNTLSSSTRG) show a composition bias toward polar residues.

The protein belongs to the helicase family. SKI2 subfamily. It depends on Zn(2+) as a cofactor. Preferentially expressed in testis and ovary.

It catalyses the reaction Couples ATP hydrolysis with the unwinding of duplex DNA by translocating in the 3'-5' direction.. The enzyme catalyses ATP + H2O = ADP + phosphate + H(+). Functionally, required for crossover formation and complete synapsis of homologous chromosomes during meiosis. This Homo sapiens (Human) protein is Probable ATP-dependent DNA helicase HFM1 (HFM1).